The primary structure comprises 526 residues: tRNA-2-methylthio-N(6)-dimethylallyladenosine synthase (526 aa).

The MTTase N-terminal domain maps to 14–130 (RTYQVRTYGC…LPTLLERARH (117 aa)). 6 residues coordinate [4Fe-4S] cluster: Cys-23, Cys-59, Cys-93, Cys-167, Cys-171, and Cys-174. One can recognise a Radical SAM core domain in the interval 153 to 401 (RESAYAGWVS…IELQERISLE (249 aa)). The TRAM domain occupies 404-483 (QAQVGRTLEL…PHHLIADGAL (80 aa)).

The protein belongs to the methylthiotransferase family. MiaB subfamily. In terms of assembly, monomer. [4Fe-4S] cluster serves as cofactor.

Its subcellular location is the cytoplasm. The enzyme catalyses N(6)-dimethylallyladenosine(37) in tRNA + (sulfur carrier)-SH + AH2 + 2 S-adenosyl-L-methionine = 2-methylsulfanyl-N(6)-dimethylallyladenosine(37) in tRNA + (sulfur carrier)-H + 5'-deoxyadenosine + L-methionine + A + S-adenosyl-L-homocysteine + 2 H(+). In terms of biological role, catalyzes the methylthiolation of N6-(dimethylallyl)adenosine (i(6)A), leading to the formation of 2-methylthio-N6-(dimethylallyl)adenosine (ms(2)i(6)A) at position 37 in tRNAs that read codons beginning with uridine. The protein is tRNA-2-methylthio-N(6)-dimethylallyladenosine synthase of Mycobacterium sp. (strain JLS).